A 59-amino-acid chain; its full sequence is Zinc finger protein HVO_2753 (59 aa).

Short sequence motifs (c(P)XCG motif) lie at residues 12–16 (CVSCG), 29–33 (CPDCG), 39–43 (CSKCR), and 51–55 (CPDCG). 2 residues coordinate Zn(2+): cysteine 29 and cysteine 32. Zn(2+) contacts are provided by cysteine 51 and cysteine 54.

As to quaternary structure, monomer in solution.

Zinc-binding protein that binds only one zinc ion. Is required for swarming and biofilm formation. This is Zinc finger protein HVO_2753 from Haloferax volcanii (strain ATCC 29605 / DSM 3757 / JCM 8879 / NBRC 14742 / NCIMB 2012 / VKM B-1768 / DS2) (Halobacterium volcanii).